We begin with the raw amino-acid sequence, 396 residues long: Cytochrome b (396 aa).

The next 4 helical transmembrane spans lie at 37–57 (FGSL…ILAM), 81–102 (WLMR…YAHI), 117–137 (WNVG…GYVL), and 182–202 (FFTF…IHIM). 2 residues coordinate heme b: His-87 and His-101. 2 residues coordinate heme b: His-186 and His-200. His-205 provides a ligand contact to a ubiquinone. A run of 4 helical transmembrane segments spans residues 230 to 250 (FKDI…SLLA), 292 to 312 (LGGV…PFTH), 324 to 344 (LAQI…WLGG), and 351 to 371 (FILM…LVFP).

The protein belongs to the cytochrome b family. The cytochrome bc1 complex contains 3 respiratory subunits (MT-CYB, CYC1 and UQCRFS1), 2 core proteins (UQCRC1 and UQCRC2) and probably 6 low-molecular weight proteins. It depends on heme b as a cofactor.

Its subcellular location is the mitochondrion inner membrane. Its function is as follows. Component of the ubiquinol-cytochrome c reductase complex (complex III or cytochrome b-c1 complex) that is part of the mitochondrial respiratory chain. The b-c1 complex mediates electron transfer from ubiquinol to cytochrome c. Contributes to the generation of a proton gradient across the mitochondrial membrane that is then used for ATP synthesis. This is Cytochrome b (mt-cyb) from Petromyzon marinus (Sea lamprey).